A 190-amino-acid chain; its full sequence is Elongation factor P (190 aa).

The protein belongs to the elongation factor P family.

Its subcellular location is the cytoplasm. Its pathway is protein biosynthesis; polypeptide chain elongation. Involved in peptide bond synthesis. Stimulates efficient translation and peptide-bond synthesis on native or reconstituted 70S ribosomes in vitro. Probably functions indirectly by altering the affinity of the ribosome for aminoacyl-tRNA, thus increasing their reactivity as acceptors for peptidyl transferase. The protein is Elongation factor P of Pseudomonas fluorescens (strain ATCC BAA-477 / NRRL B-23932 / Pf-5).